The following is a 649-amino-acid chain: Threonine--tRNA ligase (649 aa).

The region spanning 1 to 60 is the TGS domain; it reads MHVVLPDGKQLELPMGATALDAASAIGPRLAQDALAATANGELVDLMTPLPDGASITLIT. The segment at 248-544 is catalytic; it reads DHRKLGRELE…LIEHYAGDFP (297 aa). Residues Cys-341, His-392, and His-521 each coordinate Zn(2+).

Belongs to the class-II aminoacyl-tRNA synthetase family. Homodimer. Zn(2+) is required as a cofactor.

The protein resides in the cytoplasm. The enzyme catalyses tRNA(Thr) + L-threonine + ATP = L-threonyl-tRNA(Thr) + AMP + diphosphate + H(+). Catalyzes the attachment of threonine to tRNA(Thr) in a two-step reaction: L-threonine is first activated by ATP to form Thr-AMP and then transferred to the acceptor end of tRNA(Thr). Also edits incorrectly charged L-seryl-tRNA(Thr). This is Threonine--tRNA ligase from Deinococcus deserti (strain DSM 17065 / CIP 109153 / LMG 22923 / VCD115).